A 485-amino-acid chain; its full sequence is UDP-N-acetylmuramate--L-alanine ligase (485 aa).

ATP is bound at residue 129-135 (GTHGKTT).

Belongs to the MurCDEF family.

The protein resides in the cytoplasm. It carries out the reaction UDP-N-acetyl-alpha-D-muramate + L-alanine + ATP = UDP-N-acetyl-alpha-D-muramoyl-L-alanine + ADP + phosphate + H(+). It functions in the pathway cell wall biogenesis; peptidoglycan biosynthesis. Cell wall formation. In Vibrio campbellii (strain ATCC BAA-1116), this protein is UDP-N-acetylmuramate--L-alanine ligase.